The following is a 288-amino-acid chain: NAD kinase (288 aa).

The active-site Proton acceptor is D70. Residues 70–71 (DG), 144–145 (ND), R155, K172, D174, 185–190 (TGYSLS), and Q245 contribute to the NAD(+) site.

Belongs to the NAD kinase family. The cofactor is a divalent metal cation.

Its subcellular location is the cytoplasm. The enzyme catalyses NAD(+) + ATP = ADP + NADP(+) + H(+). Functionally, involved in the regulation of the intracellular balance of NAD and NADP, and is a key enzyme in the biosynthesis of NADP. Catalyzes specifically the phosphorylation on 2'-hydroxyl of the adenosine moiety of NAD to yield NADP. In Citrifermentans bemidjiense (strain ATCC BAA-1014 / DSM 16622 / JCM 12645 / Bem) (Geobacter bemidjiensis), this protein is NAD kinase.